The sequence spans 371 residues: Carlactonoate CLA methyltransferase (371 aa).

Residue Tyr21 coordinates S-adenosyl-L-homocysteine. Gln28 is a (11R)-carlactonoate binding site. Positions 62, 67, 101, 102, 141, and 142 each coordinate S-adenosyl-L-homocysteine. Residues His162 and Trp163 each coordinate (11R)-carlactonoate. Mg(2+) is bound by residues Asn180, Asp266, Tyr268, and Asp269.

It belongs to the methyltransferase superfamily. Type-7 methyltransferase family. SABATH subfamily. As to quaternary structure, homodimer. It depends on Mg(2+) as a cofactor.

It carries out the reaction (11R)-carlactonoate + S-adenosyl-L-methionine = (11R)-methyl carlactonoate + S-adenosyl-L-homocysteine. In terms of biological role, methyltransferase involved in the biosynthesis of strigolactone natural products, bioactive compounds promoting plant fitness and soil microbe interactions, but preventing shoot branching. Catalyzes the biosynthesis of (11R)-methyl carlactonoate (MeCLA) from (11R)-carlactonoate (CLA), downstream of MAX1; MeCLA is probably biologically active as a hormone regulating shoot branching and serves as a precursor of non-canonical strigolactones (SLs). This Arabidopsis thaliana (Mouse-ear cress) protein is Carlactonoate CLA methyltransferase.